A 439-amino-acid polypeptide reads, in one-letter code: Adenylosuccinate synthetase (439 aa).

Residues 14–20 and 42–44 each bind GTP; these read GDEGKGK and GHT. The Proton acceptor role is filled by D15. Residues D15 and G42 each contribute to the Mg(2+) site. IMP is bound by residues 15 to 18, 40 to 43, T130, R144, Q225, T240, and R304; these read DEGK and NAGH. Catalysis depends on H43, which acts as the Proton donor. Position 300 to 306 (300 to 306) interacts with substrate; the sequence is TTTGRRR. Residues R306, 332–334, and 414–416 each bind GTP; these read KLD and SLG.

It belongs to the adenylosuccinate synthetase family. As to quaternary structure, homodimer. Mg(2+) is required as a cofactor.

It localises to the cytoplasm. It carries out the reaction IMP + L-aspartate + GTP = N(6)-(1,2-dicarboxyethyl)-AMP + GDP + phosphate + 2 H(+). The protein operates within purine metabolism; AMP biosynthesis via de novo pathway; AMP from IMP: step 1/2. In terms of biological role, plays an important role in the de novo pathway of purine nucleotide biosynthesis. Catalyzes the first committed step in the biosynthesis of AMP from IMP. This Synechococcus sp. (strain CC9902) protein is Adenylosuccinate synthetase.